The following is a 157-amino-acid chain: Urease accessory protein UreE (157 aa).

This sequence belongs to the UreE family.

It localises to the cytoplasm. Its function is as follows. Involved in urease metallocenter assembly. Binds nickel. Probably functions as a nickel donor during metallocenter assembly. The polypeptide is Urease accessory protein UreE (Corynebacterium glutamicum (strain ATCC 13032 / DSM 20300 / JCM 1318 / BCRC 11384 / CCUG 27702 / LMG 3730 / NBRC 12168 / NCIMB 10025 / NRRL B-2784 / 534)).